The primary structure comprises 277 residues: Shikimate dehydrogenase (NADP(+)) (277 aa).

Residues 18–20 and threonine 65 contribute to the shikimate site; that span reads SKS. The Proton acceptor role is filled by lysine 69. Residue glutamate 81 participates in NADP(+) binding. Residues asparagine 90 and aspartate 106 each contribute to the shikimate site. NADP(+)-binding positions include 130–134, 154–159, and methionine 217; these read GAGGA and NRTFSK. Tyrosine 219 serves as a coordination point for shikimate. Glycine 241 serves as a coordination point for NADP(+).

This sequence belongs to the shikimate dehydrogenase family. As to quaternary structure, homodimer.

The catalysed reaction is shikimate + NADP(+) = 3-dehydroshikimate + NADPH + H(+). Its pathway is metabolic intermediate biosynthesis; chorismate biosynthesis; chorismate from D-erythrose 4-phosphate and phosphoenolpyruvate: step 4/7. Involved in the biosynthesis of the chorismate, which leads to the biosynthesis of aromatic amino acids. Catalyzes the reversible NADPH linked reduction of 3-dehydroshikimate (DHSA) to yield shikimate (SA). The sequence is that of Shikimate dehydrogenase (NADP(+)) from Vibrio vulnificus (strain CMCP6).